Reading from the N-terminus, the 281-residue chain is MEMO1 family protein Pars_0062 (281 aa).

This sequence belongs to the MEMO1 family.

The polypeptide is MEMO1 family protein Pars_0062 (Pyrobaculum arsenaticum (strain DSM 13514 / JCM 11321 / PZ6)).